A 1075-amino-acid polypeptide reads, in one-letter code: Disheveled-associated activator of morphogenesis 2 (1075 aa).

Residues 40–416 (VPIPPTEELN…QIVLQDERGD (377 aa)) form the GBD/FH3 domain. The stretch at 437 to 517 (NENEVKQWRD…VAQLNEYSQG (81 aa)) forms a coiled coil. Disordered stretches follow at residues 517–611 (GGSI…IPQP), 1006–1025 (KEQREKERRQKKAKAGSISE), and 1048–1075 (SKLKRNRKRSGNQGLETSRERVVTKLNY). A compositionally biased stretch (pro residues) spans 523 to 532 (PAPPPPPPGG). The segment covering 533–544 (PLALSSALSSAL) has biased composition (low complexity). The segment covering 550 to 581 (PPLPPPLPFSSCPPPPAPPPPPGGPPPPPGAP) has biased composition (pro residues). An FH2 domain is found at 605–1075 (KKSIPQPSHP…RERVVTKLNY (471 aa)). The 51-residue stretch at 1025–1075 (EETGEFDDLVSALRSGEVFDKDLSKLKRNRKRSGNQGLETSRERVVTKLNY) folds into the DAD domain. The segment covering 1064-1075 (TSRERVVTKLNY) has biased composition (basic and acidic residues).

This sequence belongs to the formin homology family. In terms of tissue distribution, expressed in progenitor populations of the embryonic spinal cord (at protein level).

In terms of biological role, key regulator of the Wnt signaling pathway, which is required for various processes during development, such as dorsal patterning, determination of left/right symmetry or myelination in the central nervous system. Acts downstream of Wnt ligands and upstream of beta-catenin (CTNNB1). Required for canonical Wnt signaling pathway during patterning in the dorsal spinal cord by promoting the aggregation of Disheveled (Dvl) complexes, thereby clustering and formation of Wnt receptor signalosomes and potentiating Wnt activity. During dorsal patterning of the spinal cord, inhibits oligodendrocytes differentiation via interaction with PIP5K1A. Also regulates non-canonical Wnt signaling pathway. Acts downstream of PITX2 in the developing gut and is required for left/right asymmetry within dorsal mesentery: affects mesenchymal condensation by lengthening cadherin-based junctions through WNT5A and non-canonical Wnt signaling, inducing polarized condensation in the left dorsal mesentery necessary to initiate gut rotation. Together with DAAM1, required for myocardial maturation and sarcomere assembly. The chain is Disheveled-associated activator of morphogenesis 2 from Gallus gallus (Chicken).